The sequence spans 539 residues: Sodium/hydrogen exchanger 9B2 (539 aa).

The Cytoplasmic segment spans residues 1-94; the sequence is MEDSLFSVDK…ACPPQGCFSL (94 aa). The chain crosses the membrane as a helical span at residues 95–112; it reads AITNVTMVILIWAVVWSI. Topologically, residues 113 to 121 are extracellular; that stretch reads TGPECLPGG. A helical membrane pass occupies residues 122–141; it reads NLFGILALLFSAALGGKLIS. The Cytoplasmic portion of the chain corresponds to 142 to 152; the sequence is LIKIPSLPPLP. Residues 153-169 form a helical membrane-spanning segment; that stretch reads PLLGMLLAGFLIRNIPV. At 170-179 the chain is on the extracellular side; the sequence is ITDQVQIHHK. The chain crosses the membrane as a helical span at residues 180 to 197; the sequence is WSAALRNIALAIILVRAG. Residues 198–208 lie on the Cytoplasmic side of the membrane; the sequence is LGLDPKALRKL. Residues 209 to 235 form a helical membrane-spanning segment; the sequence is KAVCLRLSFGPCVVESCTAAVVSHFIM. At 236–241 the chain is on the extracellular side; that stretch reads GFPLTW. A helical transmembrane segment spans residues 242-250; sequence GFMLGFVLG. Residues 251 to 278 lie on the Cytoplasmic side of the membrane; the sequence is AVSPAVVVPSMLILQKEGFGVDKGIPTL. 4 residues coordinate Na(+): V252, G283, D286, and D287. A helical membrane pass occupies residues 279–298; it reads LMAAGSFDDVLAITGFNTCL. Residues 299–308 lie on the Extracellular side of the membrane; sequence GMAFSSGSTL. The helical transmembrane segment at 309–332 threads the bilayer; the sequence is NTIVRGVLEVVVGIAAGLLFGFFL. At 333–347 the chain is on the cytoplasmic side; the sequence is HYFPSKDQENLKGKR. The helical transmembrane segment at 348–365 threads the bilayer; the sequence is SYLILALSVFAVFGSLYF. Residues 366-369 are Extracellular-facing; it reads GFPG. A helical membrane pass occupies residues 370-381; sequence SGGLCTLVMAFL. The Cytoplasmic segment spans residues 382–398; the sequence is AGIGWSTDKTVVEDIIA. A helical transmembrane segment spans residues 399–419; that stretch reads VSWDIFQPLLFGLIGAEISVA. Residues 420–425 are Extracellular-facing; the sequence is SLKPET. Residues 426–448 traverse the membrane as a helical segment; it reads VGLCTATLIIALIIRICISFLMV. At 449-469 the chain is on the cytoplasmic side; it reads CFSGFSLKEKIFISLAWMPKA. The helical transmembrane segment at 470-481 threads the bilayer; that stretch reads TVQAAIGSVALD. The Extracellular portion of the chain corresponds to 482–494; the sequence is TARTLENKQFEDY. Residues 495–517 traverse the membrane as a helical segment; sequence GMDVLTVAFLGILVTAPIGALVI. At 518-539 the chain is on the cytoplasmic side; that stretch reads GLTGPKMLEKSESRTVTEEGSV.

Belongs to the monovalent cation:proton antiporter 1 (CPA1) transporter (TC 2.A.36) family. In terms of assembly, homodimer; dimerization is essential for SLC9B2 activity. Lipids seem to play a role in the stabilization of the dimerization subdomain.

The protein resides in the cell membrane. It is found in the mitochondrion membrane. The protein localises to the endosome membrane. Its subcellular location is the recycling endosome membrane. It localises to the cytoplasmic vesicle. The protein resides in the secretory vesicle. It is found in the synaptic vesicle membrane. The protein localises to the basolateral cell membrane. Its subcellular location is the apical cell membrane. The catalysed reaction is Li(+)(out) + H(+)(in) = Li(+)(in) + H(+)(out). It catalyses the reaction Li(+)(in) + Na(+)(out) = Li(+)(out) + Na(+)(in). It carries out the reaction Na(+)(in) + H(+)(out) = Na(+)(out) + H(+)(in). With respect to regulation, allosterically inhibited by the N-terminal domain. Inhibited by phloretin. Electroneutral Na(+) Li(+)/H(+) antiporter that extrudes Na(+) or Li(+) in exchange for external protons across the membrane. Uses the proton gradient/membrane potential to extrude sodium. Contributes to the regulation of intracellular pH and sodium homeostasis. Also able to mediate Na(+)/Li(+) antiporter activity in kidney. The sequence is that of Sodium/hydrogen exchanger 9B2 (slc9b2) from Xenopus tropicalis (Western clawed frog).